The sequence spans 403 residues: Argininosuccinate synthase (403 aa).

ATP is bound by residues 12–20 and Ala-39; that span reads AYSGGLDTS. The L-citrulline site is built by Tyr-90 and Ser-95. ATP is bound at residue Gly-120. Residues Thr-122, Asn-126, and Asp-127 each coordinate L-aspartate. An L-citrulline-binding site is contributed by Asn-126. The L-citrulline site is built by Arg-130, Ser-182, Ser-191, Glu-267, and Tyr-279.

The protein belongs to the argininosuccinate synthase family. Type 1 subfamily. Homotetramer.

Its subcellular location is the cytoplasm. It catalyses the reaction L-citrulline + L-aspartate + ATP = 2-(N(omega)-L-arginino)succinate + AMP + diphosphate + H(+). Its pathway is amino-acid biosynthesis; L-arginine biosynthesis; L-arginine from L-ornithine and carbamoyl phosphate: step 2/3. This chain is Argininosuccinate synthase, found in Ruthia magnifica subsp. Calyptogena magnifica.